We begin with the raw amino-acid sequence, 332 residues long: tRNA-dihydrouridine(20/20a) synthase (332 aa).

FMN-binding positions include 19–21 (PML) and glutamine 71. Residue cysteine 101 is the Proton donor of the active site. Residues lysine 140, histidine 173, 213–215 (NGG), and 235–236 (GR) each bind FMN.

The protein belongs to the Dus family. DusA subfamily. It depends on FMN as a cofactor.

The enzyme catalyses 5,6-dihydrouridine(20) in tRNA + NADP(+) = uridine(20) in tRNA + NADPH + H(+). The catalysed reaction is 5,6-dihydrouridine(20) in tRNA + NAD(+) = uridine(20) in tRNA + NADH + H(+). It catalyses the reaction 5,6-dihydrouridine(20a) in tRNA + NADP(+) = uridine(20a) in tRNA + NADPH + H(+). It carries out the reaction 5,6-dihydrouridine(20a) in tRNA + NAD(+) = uridine(20a) in tRNA + NADH + H(+). Catalyzes the synthesis of 5,6-dihydrouridine (D), a modified base found in the D-loop of most tRNAs, via the reduction of the C5-C6 double bond in target uridines. Specifically modifies U20 and U20a in tRNAs. This is tRNA-dihydrouridine(20/20a) synthase from Salmonella typhi.